We begin with the raw amino-acid sequence, 301 residues long: NADH-cytochrome b5 reductase 3 (301 aa).

A lipid anchor (N-myristoyl glycine) is attached at Gly2. In terms of domain architecture, FAD-binding FR-type spans 40 to 152 (DIKYPLRLID…RGPNGLLVYQ (113 aa)). Residue Lys42 is modified to N6-acetyllysine. The residue at position 43 (Tyr43) is a Phosphotyrosine. N6-acetyllysine is present on Lys50. Positions 92, 93, 94, 109, 111, and 114 each coordinate FAD. Lys120 is modified (N6-acetyllysine). Lys126, Met127, Ser128, and Thr185 together coordinate FAD.

The protein belongs to the flavoprotein pyridine nucleotide cytochrome reductase family. As to quaternary structure, component of a complex composed of cytochrome b5, NADH-cytochrome b5 reductase (CYB5R3) and MTARC2. Interacts with MTLN; the interaction is required to maintain cellular lipid composition and leads to stimulation of mitochondrial respiratory complex I activity. FAD serves as cofactor.

It localises to the endoplasmic reticulum membrane. The protein resides in the mitochondrion outer membrane. The catalysed reaction is 2 Fe(III)-[cytochrome b5] + NADH = 2 Fe(II)-[cytochrome b5] + NAD(+) + H(+). Functionally, catalyzes the reduction of two molecules of cytochrome b5 using NADH as the electron donor. The polypeptide is NADH-cytochrome b5 reductase 3 (Mus musculus (Mouse)).